A 442-amino-acid chain; its full sequence is Ribosomal protein uS12 methylthiotransferase RimO (442 aa).

The MTTase N-terminal domain maps to 8–118 (PKVGFVSLGC…VLGHVHKYVE (111 aa)). C17, C53, C82, C150, C154, and C157 together coordinate [4Fe-4S] cluster. Residues 136-373 (LTPRHYAYLK…MELQQQVSIR (238 aa)) enclose the Radical SAM core domain. The 67-residue stretch at 376-442 (ARKVGKEMLV…EYDLWASLID (67 aa)) folds into the TRAM domain.

It belongs to the methylthiotransferase family. RimO subfamily. It depends on [4Fe-4S] cluster as a cofactor.

It is found in the cytoplasm. The catalysed reaction is L-aspartate(89)-[ribosomal protein uS12]-hydrogen + (sulfur carrier)-SH + AH2 + 2 S-adenosyl-L-methionine = 3-methylsulfanyl-L-aspartate(89)-[ribosomal protein uS12]-hydrogen + (sulfur carrier)-H + 5'-deoxyadenosine + L-methionine + A + S-adenosyl-L-homocysteine + 2 H(+). Catalyzes the methylthiolation of an aspartic acid residue of ribosomal protein uS12. This chain is Ribosomal protein uS12 methylthiotransferase RimO, found in Aeromonas hydrophila subsp. hydrophila (strain ATCC 7966 / DSM 30187 / BCRC 13018 / CCUG 14551 / JCM 1027 / KCTC 2358 / NCIMB 9240 / NCTC 8049).